Reading from the N-terminus, the 398-residue chain is NADH-quinone oxidoreductase subunit D (398 aa).

This sequence belongs to the complex I 49 kDa subunit family. As to quaternary structure, NDH-1 is composed of 14 different subunits. Subunits NuoB, C, D, E, F, and G constitute the peripheral sector of the complex.

The protein localises to the cell inner membrane. It carries out the reaction a quinone + NADH + 5 H(+)(in) = a quinol + NAD(+) + 4 H(+)(out). Its function is as follows. NDH-1 shuttles electrons from NADH, via FMN and iron-sulfur (Fe-S) centers, to quinones in the respiratory chain. The immediate electron acceptor for the enzyme in this species is believed to be ubiquinone. Couples the redox reaction to proton translocation (for every two electrons transferred, four hydrogen ions are translocated across the cytoplasmic membrane), and thus conserves the redox energy in a proton gradient. In Rhodospirillum centenum (strain ATCC 51521 / SW), this protein is NADH-quinone oxidoreductase subunit D.